Consider the following 1217-residue polypeptide: CST complex subunit CTC1 (1217 aa).

The tract at residues 327 to 346 (LEADPKPLPTPSNSEDKKDP) is disordered.

It belongs to the CTC1 family. Component of the CST complex, composed of TEN1/C17orf106, CTC1/C17orf68 and STN1; in the complex interacts directly with STN1. Interacts with ACD and POT1.

The protein resides in the nucleus. The protein localises to the chromosome. It localises to the telomere. Its function is as follows. Component of the CST complex proposed to act as a specialized replication factor promoting DNA replication under conditions of replication stress or natural replication barriers such as the telomere duplex. The CST complex binds single-stranded DNA with high affinity in a sequence-independent manner, while isolated subunits bind DNA with low affinity by themselves. Initially the CST complex has been proposed to protect telomeres from DNA degradation. However, the CST complex has been shown to be involved in several aspects of telomere replication. The CST complex inhibits telomerase and is involved in telomere length homeostasis; it is proposed to bind to newly telomerase-synthesized 3' overhangs and to terminate telomerase action implicating the association with the ACD:POT1 complex thus interfering with its telomerase stimulation activity. The CST complex is also proposed to be involved in fill-in synthesis of the telomeric C-strand probably implicating recruitment and activation of DNA polymerase alpha. The CST complex facilitates recovery from many forms of exogenous DNA damage; seems to be involved in the re-initiation of DNA replication at repaired forks and/or dormant origins. Involved in telomere maintenance. Involved in genome stability. May be in involved in telomeric C-strand fill-in during late S/G2 phase. The sequence is that of CST complex subunit CTC1 (CTC1) from Pongo abelii (Sumatran orangutan).